Reading from the N-terminus, the 398-residue chain is Probable purine permease 17 (398 aa).

Positions 1–26 (MEMSKASKQTTRHEESEHVQNPEPDQ) are disordered. Residues 11–20 (TRHEESEHVQ) are compositionally biased toward basic and acidic residues. Ser29 is modified (phosphoserine). 10 helical membrane-spanning segments follow: residues 43–63 (ISVS…MLLL), 88–108 (WTQA…FFIF), 127–147 (LFFL…LFAL), 155–175 (GIFS…TAII), 183–203 (WIII…PDFG), 219–239 (WLAF…QLGF), 258–278 (VLEM…VGLF), 301–321 (VLSL…MIGL), 332–352 (VVHM…FDFM), and 355–375 (VFSW…GSYF).

The protein belongs to the purine permeases (TC 2.A.7.14) family.

Its subcellular location is the membrane. This Arabidopsis thaliana (Mouse-ear cress) protein is Probable purine permease 17 (PUP17).